The sequence spans 87 residues: Small ribosomal subunit protein uS19 (87 aa).

This sequence belongs to the universal ribosomal protein uS19 family.

Its function is as follows. Protein S19 forms a complex with S13 that binds strongly to the 16S ribosomal RNA. This is Small ribosomal subunit protein uS19 (rpsS) from Mycoplasma genitalium (strain ATCC 33530 / DSM 19775 / NCTC 10195 / G37) (Mycoplasmoides genitalium).